The chain runs to 478 residues: H(+)/Cl(-) exchange transporter ClcA (478 aa).

Over 1 to 32 the chain is Cytoplasmic; sequence MTHSTQQLSPEGVAEGKRGRLIRELVNRDKTP. The chain crosses the membrane as a helical span at residues 33–69; it reads LIILIMAAVVGVVTGLLGVAFDRGVDWVQQQRLLALA. The Periplasmic portion of the chain corresponds to 70–76; sequence NVADYAL. The chain crosses the membrane as a helical span at residues 77–100; it reads LVWPLAFIMSALLAMMGYFLVSRF. Residues 106–110 carry the Selectivity filter part_1 motif; it reads GSGIP. Ser107 contributes to the chloride binding site. An intramembrane region (helical) is located at residues 109-116; the sequence is IPEIEGAM. At 117–123 the chain is on the cytoplasmic side; sequence EEMRPVR. Helical transmembrane passes span 124 to 141 and 148 to 166; these read WWRVIPVKFIGGLGTLGA and EGPMVQMGGNSGRMIVDIF. The short motif at 146-150 is the Selectivity filter part_2 element; that stretch reads GREGP. The Cytoplasmic portion of the chain corresponds to 167–176; the sequence is RLRSPEARHS. Intramembrane regions (helical) lie at residues 177–189 and 193–201; these read LLATGAAAGLSAA and PLAGILFVI. The Cytoplasmic portion of the chain corresponds to 202–214; it reads EEMRSQFRYSLVS. A helical transmembrane segment spans residues 215-232; that stretch reads IKAVFIGVITSTIVYRYF. Topologically, residues 233 to 252 are periplasmic; the sequence is NGERAIIEVGKLSDAPLNTL. The chain crosses the membrane as a helical span at residues 253 to 281; sequence WLYLLLGIIFGAVGVIFNALIFRTQDMFV. At 282–287 the chain is on the cytoplasmic side; that stretch reads RFHGGD. A helical membrane pass occupies residues 288–309; sequence WRKLVLIGGLLGGMCGLLALLH. Residues 310–329 lie on the Periplasmic side of the membrane; the sequence is GNAVGGGFALIPIAAAGNFS. Transmembrane regions (helical) follow at residues 330–349 and 355–376; these read IGMLLFIFIARVITTLLCFG and GIFAPMLALGTILGTAFGLSCA. The short motif at 355 to 359 is the Selectivity filter part_3 element; it reads GIFAP. The chloride site is built by Ile356 and Phe357. Residues 377 to 386 lie on the Periplasmic side of the membrane; sequence HFFPQYGIEA. Residues 387–401 constitute an intramembrane region (helical); the sequence is GTFAIAGMGALFAAS. Positions 402–404 form an intramembrane region, note=Loop between two helices; it reads VRA. An intramembrane region (helical) is located at residues 405 to 416; that stretch reads PLTGIVLVLEMT. The segment at residues 417–421 is an intramembrane region (note=Loop between two helices); that stretch reads DNYQL. Residues 422-438 form a helical membrane-spanning segment; it reads ILPMIVTCLGATLIAQF. Residues 439 to 478 are Cytoplasmic-facing; the sequence is MGGKPLYSAILARTLAKQEQARATVIAQEPAVENTPQIGK. A chloride-binding site is contributed by Tyr445.

The protein belongs to the chloride channel (TC 2.A.49) family. ClcA subfamily. Homodimer.

It is found in the cell inner membrane. The enzyme catalyses 2 chloride(in) + H(+)(out) = 2 chloride(out) + H(+)(in). Its function is as follows. Proton-coupled chloride transporter. Functions as antiport system and exchanges two chloride ions for 1 proton. Probably acts as an electrical shunt for an outwardly-directed proton pump that is linked to amino acid decarboxylation, as part of the extreme acid resistance (XAR) response. This chain is H(+)/Cl(-) exchange transporter ClcA, found in Yersinia pestis bv. Antiqua (strain Antiqua).